Here is a 183-residue protein sequence, read N- to C-terminus: Orotate phosphoribosyltransferase (183 aa).

5-phospho-alpha-D-ribose 1-diphosphate-binding positions include Arg-90, Lys-91, Lys-94, and 115–123 (DDVATTGGS). Residues Thr-119 and Arg-147 each coordinate orotate.

This sequence belongs to the purine/pyrimidine phosphoribosyltransferase family. PyrE subfamily. As to quaternary structure, homodimer. Mg(2+) is required as a cofactor.

The catalysed reaction is orotidine 5'-phosphate + diphosphate = orotate + 5-phospho-alpha-D-ribose 1-diphosphate. It functions in the pathway pyrimidine metabolism; UMP biosynthesis via de novo pathway; UMP from orotate: step 1/2. In terms of biological role, catalyzes the transfer of a ribosyl phosphate group from 5-phosphoribose 1-diphosphate to orotate, leading to the formation of orotidine monophosphate (OMP). This is Orotate phosphoribosyltransferase from Methanopyrus kandleri (strain AV19 / DSM 6324 / JCM 9639 / NBRC 100938).